The following is a 520-amino-acid chain: Sensory neuron membrane protein 2 (520 aa).

Over 1–7 the chain is Cytoplasmic; that stretch reads MLGKHSK. A helical transmembrane segment spans residues 8-28; sequence IFFGVSLIFLVIAIVLASWGF. Over 29 to 468 the chain is Extracellular; sequence QKIVNKQIQK…DSHKLLGYVE (440 aa). N-linked (GlcNAc...) asparagine glycosylation is found at Asn44, Asn67, Asn104, Asn228, Asn271, Asn313, and Asn342. 3 cysteine pairs are disulfide-bonded: Cys267–Cys337, Cys298–Cys361, and Cys339–Cys350. Residues 469 to 489 form a helical membrane-spanning segment; the sequence is VAKWFLLTIAIISVIASAVAV. Over 490–520 the chain is Cytoplasmic; it reads ARANALLSWPRNSNSVSFILGPSVTQVNKGN.

Belongs to the CD36 family. Localizes to cells surrounding the sensory neurons in the antenna. Associate in a ratio of 2:1 with the neurons expressing the other subtype SNMP1.

Its subcellular location is the cell membrane. Its function is as follows. Plays an olfactory role that is not restricted to pheromone sensitivity. May play a role in the elimination of lipophilic components from the sensillum lymph. The protein is Sensory neuron membrane protein 2 of Heliothis virescens (Tobacco budworm moth).